Here is a 447-residue protein sequence, read N- to C-terminus: Phosphoglucosamine mutase (447 aa).

Serine 104 acts as the Phosphoserine intermediate in catalysis. Residues serine 104, aspartate 243, aspartate 245, and aspartate 247 each contribute to the Mg(2+) site. Serine 104 is modified (phosphoserine).

The protein belongs to the phosphohexose mutase family. Mg(2+) serves as cofactor. Post-translationally, activated by phosphorylation.

The catalysed reaction is alpha-D-glucosamine 1-phosphate = D-glucosamine 6-phosphate. Its function is as follows. Catalyzes the conversion of glucosamine-6-phosphate to glucosamine-1-phosphate. In Corynebacterium glutamicum (strain ATCC 13032 / DSM 20300 / JCM 1318 / BCRC 11384 / CCUG 27702 / LMG 3730 / NBRC 12168 / NCIMB 10025 / NRRL B-2784 / 534), this protein is Phosphoglucosamine mutase.